The following is a 331-amino-acid chain: MAQLFYDSDADLGLLNSKTVAIIGYGSQGHAHALNLKDSGVNVVVGLYDGSRSADKAKADGLEVLSVADASAKADWVMVLLPDEFQKDVYEKEIAPHLTSGKVLSFAHGFNIRFELIKPPTDVDVVMIAPKGPGHTVRWEYQNGQGVPALFAIEQDASGQARGLAMAYAKGIGGTRAGILETNFKEETETDLFGEQAVLCGGLSELVKAGFETLVEAGYQPELAYFECLHEVKLIVDLMVKGGLTSMRDSISNTAEYGDYVSGPRLITADTKAEMKRVLADIQDGTFAKNFVAECEAGKPEMKKVRDRDSQHPIEKVGKGLRSMFSWLKDA.

Positions 2–182 (AQLFYDSDAD…GGTRAGILET (181 aa)) constitute a KARI N-terminal Rossmann domain. NADP(+) is bound by residues 25 to 28 (YGSQ), Ser-51, Ser-53, and 83 to 86 (DEFQ). His-108 is a catalytic residue. Position 134 (Gly-134) interacts with NADP(+). One can recognise a KARI C-terminal knotted domain in the interval 183-328 (NFKEETETDL…KGLRSMFSWL (146 aa)). 4 residues coordinate Mg(2+): Asp-191, Glu-195, Glu-227, and Glu-231. Ser-252 is a binding site for substrate.

Belongs to the ketol-acid reductoisomerase family. The cofactor is Mg(2+).

The enzyme catalyses (2R)-2,3-dihydroxy-3-methylbutanoate + NADP(+) = (2S)-2-acetolactate + NADPH + H(+). It carries out the reaction (2R,3R)-2,3-dihydroxy-3-methylpentanoate + NADP(+) = (S)-2-ethyl-2-hydroxy-3-oxobutanoate + NADPH + H(+). Its pathway is amino-acid biosynthesis; L-isoleucine biosynthesis; L-isoleucine from 2-oxobutanoate: step 2/4. It functions in the pathway amino-acid biosynthesis; L-valine biosynthesis; L-valine from pyruvate: step 2/4. Its function is as follows. Involved in the biosynthesis of branched-chain amino acids (BCAA). Catalyzes an alkyl-migration followed by a ketol-acid reduction of (S)-2-acetolactate (S2AL) to yield (R)-2,3-dihydroxy-isovalerate. In the isomerase reaction, S2AL is rearranged via a Mg-dependent methyl migration to produce 3-hydroxy-3-methyl-2-ketobutyrate (HMKB). In the reductase reaction, this 2-ketoacid undergoes a metal-dependent reduction by NADPH to yield (R)-2,3-dihydroxy-isovalerate. This Parasynechococcus marenigrum (strain WH8102) protein is Ketol-acid reductoisomerase (NADP(+)).